Reading from the N-terminus, the 119-residue chain is Large ribosomal subunit protein uL18 (119 aa).

This sequence belongs to the universal ribosomal protein uL18 family. Part of the 50S ribosomal subunit; part of the 5S rRNA/L5/L18/L25 subcomplex. Contacts the 5S and 23S rRNAs.

In terms of biological role, this is one of the proteins that bind and probably mediate the attachment of the 5S RNA into the large ribosomal subunit, where it forms part of the central protuberance. This Clostridium kluyveri (strain ATCC 8527 / DSM 555 / NBRC 12016 / NCIMB 10680 / K1) protein is Large ribosomal subunit protein uL18.